The primary structure comprises 129 residues: uncharacterized protein (129 aa).

This is an uncharacterized protein from Archaeoglobus fulgidus (strain ATCC 49558 / DSM 4304 / JCM 9628 / NBRC 100126 / VC-16).